The sequence spans 671 residues: ABC transporter ATP-binding protein/permease wht-1 (671 aa).

Over 1–408 the chain is Cytoplasmic; that stretch reads MHKAPISTLI…SWLTVIRDPN (408 aa). Residues 64–310 enclose the ABC transporter domain; that stretch reads TNFVDRFRNN…FEKCGYPCPA (247 aa). Residue 100 to 107 coordinates ATP; it reads GSSGAGKT. Residues 409–429 traverse the membrane as a helical segment; it reads LLSVRLLQILITAFITGIVFF. Over 430–451 the chain is Extracellular; sequence QTPVTPATIISINGIMFNHIRN. A helical membrane pass occupies residues 452-472; the sequence is MNFMLQFPNVPVITAELPIVL. The Cytoplasmic segment spans residues 473–497; sequence RENANGVYRTSAYFLAKNIAELPQY. A helical membrane pass occupies residues 498-518; that stretch reads IILPILYNTIVYWMSGLYPNF. Residues 519–525 lie on the Extracellular side of the membrane; that stretch reads WNYCFAS. Residues 526–546 form a helical membrane-spanning segment; it reads LVTILITNVAISISYAVATIF. The Cytoplasmic segment spans residues 547–550; the sequence is ANTD. A helical transmembrane segment spans residues 551–571; that stretch reads VAMTILPIFVVPIMAFGGFFI. Residues 572-644 lie on the Extracellular side of the membrane; sequence TFDAIPSYFK…DFSASHKIFD (73 aa). Residues 645–665 form a helical membrane-spanning segment; sequence ISILFGMFIGIRIIAYVALLI. At 666 to 671 the chain is on the cytoplasmic side; that stretch reads RSYNNT.

It belongs to the ABC transporter superfamily. ABCG family. Eye pigment precursor importer (TC 3.A.1.204) subfamily. In terms of tissue distribution, expressed in the intestine in both larvae and adults. Expressed in the gut of males.

It is found in the membrane. Its function is as follows. Required for efficient RNA interference (RNAi). Plays a role in germline development. The sequence is that of ABC transporter ATP-binding protein/permease wht-1 from Caenorhabditis elegans.